The chain runs to 150 residues: Arginine repressor (150 aa).

Belongs to the ArgR family.

The protein localises to the cytoplasm. The protein operates within amino-acid biosynthesis; L-arginine biosynthesis [regulation]. In terms of biological role, regulates arginine biosynthesis genes. The sequence is that of Arginine repressor from Staphylococcus aureus (strain Mu3 / ATCC 700698).